Consider the following 146-residue polypeptide: Neutral phospholipase A2 B (146 aa).

Positions 1-21 are cleaved as a signal peptide; the sequence is MNPAHLLILAAVCVSPLGASS. A propeptide spanning residues 22-27 is cleaved from the precursor; that stretch reads NRPMPL. 7 disulfides stabilise this stretch: Cys38–Cys98, Cys53–Cys145, Cys55–Cys71, Cys70–Cys126, Cys77–Cys119, Cys87–Cys112, and Cys105–Cys117. Residues Tyr54, Gly56, and Gly58 each contribute to the Ca(2+) site. Residue His74 is part of the active site. Ca(2+) is bound at residue Asp75. Asp120 is a catalytic residue.

It belongs to the phospholipase A2 family. Group I subfamily. D49 sub-subfamily. Ca(2+) serves as cofactor. In terms of tissue distribution, expressed by the venom gland.

The protein resides in the secreted. It catalyses the reaction a 1,2-diacyl-sn-glycero-3-phosphocholine + H2O = a 1-acyl-sn-glycero-3-phosphocholine + a fatty acid + H(+). In terms of biological role, PLA2 catalyzes the calcium-dependent hydrolysis of the 2-acyl groups in 3-sn-phosphoglycerides. The chain is Neutral phospholipase A2 B from Naja sputatrix (Malayan spitting cobra).